We begin with the raw amino-acid sequence, 286 residues long: Bifunctional protein FolD (286 aa).

Residues 166–168 (GAS) and I232 contribute to the NADP(+) site.

This sequence belongs to the tetrahydrofolate dehydrogenase/cyclohydrolase family. As to quaternary structure, homodimer.

It carries out the reaction (6R)-5,10-methylene-5,6,7,8-tetrahydrofolate + NADP(+) = (6R)-5,10-methenyltetrahydrofolate + NADPH. It catalyses the reaction (6R)-5,10-methenyltetrahydrofolate + H2O = (6R)-10-formyltetrahydrofolate + H(+). The protein operates within one-carbon metabolism; tetrahydrofolate interconversion. In terms of biological role, catalyzes the oxidation of 5,10-methylenetetrahydrofolate to 5,10-methenyltetrahydrofolate and then the hydrolysis of 5,10-methenyltetrahydrofolate to 10-formyltetrahydrofolate. The polypeptide is Bifunctional protein FolD (Blochmanniella pennsylvanica (strain BPEN)).